A 209-amino-acid polypeptide reads, in one-letter code: Large ribosomal subunit protein uL3 (209 aa).

The segment at 122–152 is disordered; the sequence is AIKRHGQSRGPMSHGSRYHRRPGSMGPVDPN.

The protein belongs to the universal ribosomal protein uL3 family. As to quaternary structure, part of the 50S ribosomal subunit. Forms a cluster with proteins L14 and L19. Interacts with RNA helicase CshA.

One of the primary rRNA binding proteins, it binds directly near the 3'-end of the 23S rRNA, where it nucleates assembly of the 50S subunit. Strongly stimulates 23S rRNA precursor processing by mini-ribonuclease 3 (MrnC); 20-30% DMSO can replace L3, suggesting the protein may alter rRNA conformation. In Bacillus subtilis (strain 168), this protein is Large ribosomal subunit protein uL3.